The sequence spans 633 residues: DNA mismatch repair protein MutL (633 aa).

The segment at 338–407 (AAPEPERTLP…VPPPTLRAIP (70 aa)) is disordered. Residues 366–391 (PGSAFPAAARPAPASSAAQPPLSSSA) are compositionally biased toward low complexity.

It belongs to the DNA mismatch repair MutL/HexB family.

In terms of biological role, this protein is involved in the repair of mismatches in DNA. It is required for dam-dependent methyl-directed DNA mismatch repair. May act as a 'molecular matchmaker', a protein that promotes the formation of a stable complex between two or more DNA-binding proteins in an ATP-dependent manner without itself being part of a final effector complex. The polypeptide is DNA mismatch repair protein MutL (Akkermansia muciniphila (strain ATCC BAA-835 / DSM 22959 / JCM 33894 / BCRC 81048 / CCUG 64013 / CIP 107961 / Muc)).